Consider the following 70-residue polypeptide: Plasticin-S1 (70 aa).

An N-terminal signal peptide occupies residues 1 to 22 (MAFLKKSLFLVLFLALVPLSIC). A propeptide spanning residues 23 to 45 (EEEKREGENEKEQEDDNQSEEKR) is cleaved from the precursor. The segment at 25–45 (EKREGENEKEQEDDNQSEEKR) is disordered.

Belongs to the frog skin active peptide (FSAP) family. Plasticin subfamily. Expressed by the skin glands.

The protein localises to the secreted. Functionally, the native peptide is a cationic amphipathic alpha-helical antimicrobial peptide with potent activity against both Gram-positive and Gram-negative bacteria. It has weak activity against fungi and shows low hemolytic activity. The sequence is that of Plasticin-S1 from Phyllomedusa sauvagei (Sauvage's leaf frog).